The chain runs to 523 residues: Lysine--tRNA ligase (523 aa).

The 'HIGH' region signature appears at 30-38 (PSGYVHVGN). Residues Asp-95, Cys-99, His-100, His-106, Cys-177, His-180, Cys-199, and His-203 each contribute to the Zn(2+) site. A 'KMSKS' region motif is present at residues 279–283 (KMSGS).

Belongs to the class-I aminoacyl-tRNA synthetase family. Requires Zn(2+) as cofactor.

It is found in the cytoplasm. The catalysed reaction is tRNA(Lys) + L-lysine + ATP = L-lysyl-tRNA(Lys) + AMP + diphosphate. In Pyrococcus furiosus (strain ATCC 43587 / DSM 3638 / JCM 8422 / Vc1), this protein is Lysine--tRNA ligase (lysS).